Reading from the N-terminus, the 281-residue chain is Complement C1q tumor necrosis factor-related protein 1 (281 aa).

Residues 1–25 (MGSCAQGFMLGCCLLLAITWGPILS) form the signal peptide. The interval 35–68 (QEWEETEELPSPLDPVTRPEETREKYSPRQGEDL) is disordered. The span at 51 to 66 (TRPEETREKYSPRQGE) shows a compositional bias: basic and acidic residues. The N-linked (GlcNAc...) asparagine glycan is linked to N93. The Collagen-like domain occupies 99–140 (GEKGDRGDRGLQGKYGKIGSTGPRGHVGPKGQKGSIGAPGNH). The interval 107 to 136 (RGLQGKYGKIGSTGPRGHVGPKGQKGSIGA) is disordered. Positions 141–281 (CKSQYAAFSV…GYLVKPASEP (141 aa)) constitute a C1q domain.

It localises to the secreted. In Mus musculus (Mouse), this protein is Complement C1q tumor necrosis factor-related protein 1 (C1qtnf1).